Reading from the N-terminus, the 396-residue chain is Glycerate kinase (396 aa).

The protein belongs to the glycerate kinase type-2 family.

Its subcellular location is the cytoplasm. It carries out the reaction (R)-glycerate + ATP = (2R)-3-phosphoglycerate + ADP + H(+). The sequence is that of Glycerate kinase (GLYCTK) from Macaca fascicularis (Crab-eating macaque).